An 83-amino-acid polypeptide reads, in one-letter code: Mitochondrial import inner membrane translocase subunit Tim8 B (83 aa).

The residue at position 2 (Ala2) is an N-acetylalanine. The Twin CX3C motif signature appears at 36–59; the sequence is CWDKCVEKPGNRLDSRTENCLSSC. Disulfide bonds link Cys36–Cys59 and Cys40–Cys55.

This sequence belongs to the small Tim family. In terms of assembly, heterohexamer; possibly composed of 3 copies of TIMM8B and 3 copies of TIMM13, named soluble 70 kDa complex. Associates with the TIM22 complex, whose core is composed of TIMM22.

It localises to the mitochondrion inner membrane. In terms of biological role, probable mitochondrial intermembrane chaperone that participates in the import and insertion of some multi-pass transmembrane proteins into the mitochondrial inner membrane. Also required for the transfer of beta-barrel precursors from the TOM complex to the sorting and assembly machinery (SAM complex) of the outer membrane. Acts as a chaperone-like protein that protects the hydrophobic precursors from aggregation and guide them through the mitochondrial intermembrane space. In Bos taurus (Bovine), this protein is Mitochondrial import inner membrane translocase subunit Tim8 B (TIMM8B).